Consider the following 358-residue polypeptide: Chorismate synthase (358 aa).

The NADP(+) site is built by Arg48 and Arg54. FMN contacts are provided by residues 125–127, Gly282, 297–301, and Arg323; these read RSS and KPPAS.

Belongs to the chorismate synthase family. In terms of assembly, homotetramer. FMNH2 serves as cofactor.

The enzyme catalyses 5-O-(1-carboxyvinyl)-3-phosphoshikimate = chorismate + phosphate. It functions in the pathway metabolic intermediate biosynthesis; chorismate biosynthesis; chorismate from D-erythrose 4-phosphate and phosphoenolpyruvate: step 7/7. Catalyzes the anti-1,4-elimination of the C-3 phosphate and the C-6 proR hydrogen from 5-enolpyruvylshikimate-3-phosphate (EPSP) to yield chorismate, which is the branch point compound that serves as the starting substrate for the three terminal pathways of aromatic amino acid biosynthesis. This reaction introduces a second double bond into the aromatic ring system. This chain is Chorismate synthase, found in Roseiflexus castenholzii (strain DSM 13941 / HLO8).